An 80-amino-acid chain; its full sequence is U-Asilidin(1)-Dg12 (80 aa).

The signal sequence occupies residues 1–24 (MARLLVVSVGVFLAVIMLSSETMS). A propeptide spanning residues 25–46 (LPAGENLPALTLFEAQNQLIGL) is cleaved from the precursor. 3 cysteine pairs are disulfide-bonded: cysteine 53-cysteine 67, cysteine 60-cysteine 71, and cysteine 66-cysteine 78.

It belongs to the asilidin-1 family. As to expression, expressed by the venom gland.

The protein localises to the secreted. Its function is as follows. Neurotoxin that may modulate ions channels (other than those tested). In vivo, induces neurotoxic effects when injected into insects (tested on L.cuprina and A.domesticus). The sequence is that of U-Asilidin(1)-Dg12 from Dolopus genitalis (Giant Australian assassin fly).